Here is a 600-residue protein sequence, read N- to C-terminus: Calcium/calmodulin-dependent serine/threonine-protein kinase 1 (600 aa).

The disordered stretch occupies residues 1-99 (MGLCHGKSAA…GGFKRPFPPP (99 aa)). The segment covering 24-56 (TRVAEAAAAPAKPASPAPSAAAAAAAPAKPGTP) has biased composition (low complexity). The segment covering 74 to 85 (YKGSPANSSVAS) has biased composition (polar residues). In terms of domain architecture, Protein kinase spans 147 to 409 (YELGREVGRG…AAQALCHPWI (263 aa)). Residues 153 to 161 (VGRGHFGYT) and Lys-179 contribute to the ATP site. The active-site Proton acceptor is the Asp-275.

Belongs to the protein kinase superfamily. Ser/Thr protein kinase family. Autophosphorylated. In terms of tissue distribution, highly expressed in roots in the zone of cell division. Expressed in leaf mesophyll cells and at lower levels in mature stems.

It carries out the reaction L-seryl-[protein] + ATP = O-phospho-L-seryl-[protein] + ADP + H(+). The enzyme catalyses L-threonyl-[protein] + ATP = O-phospho-L-threonyl-[protein] + ADP + H(+). With respect to regulation, activated by the binding of calmodulin-like protein 1 (CML1) in the presence of Ca(2+). Possesses kinase activity in vitro. The polypeptide is Calcium/calmodulin-dependent serine/threonine-protein kinase 1 (CAMK1) (Oryza sativa subsp. japonica (Rice)).